The sequence spans 85 residues: Large ribosomal subunit protein bL27 (85 aa).

Positions 1–21 (MAHKKGGGSTHNGRDSKPKML) are disordered.

It belongs to the bacterial ribosomal protein bL27 family.

The polypeptide is Large ribosomal subunit protein bL27 (Albidiferax ferrireducens (strain ATCC BAA-621 / DSM 15236 / T118) (Rhodoferax ferrireducens)).